Here is a 363-residue protein sequence, read N- to C-terminus: Chorismate synthase (363 aa).

Residues Arg47 and Arg53 each contribute to the NADP(+) site. FMN contacts are provided by residues 124 to 126 (RSS), Gly286, 301 to 305 (KPTAT), and Arg327.

Belongs to the chorismate synthase family. In terms of assembly, homotetramer. FMNH2 is required as a cofactor.

The enzyme catalyses 5-O-(1-carboxyvinyl)-3-phosphoshikimate = chorismate + phosphate. The protein operates within metabolic intermediate biosynthesis; chorismate biosynthesis; chorismate from D-erythrose 4-phosphate and phosphoenolpyruvate: step 7/7. Catalyzes the anti-1,4-elimination of the C-3 phosphate and the C-6 proR hydrogen from 5-enolpyruvylshikimate-3-phosphate (EPSP) to yield chorismate, which is the branch point compound that serves as the starting substrate for the three terminal pathways of aromatic amino acid biosynthesis. This reaction introduces a second double bond into the aromatic ring system. The polypeptide is Chorismate synthase (Thermosynechococcus vestitus (strain NIES-2133 / IAM M-273 / BP-1)).